A 312-amino-acid chain; its full sequence is MANKRKKVSVIGAGFTGATTAFLTAQKELADVVLVDIPQLENPTKGKALDMLEASPVQGFDANITGTSNYEDTAGSDVVVITAGIARKPGMSRDDLVSTNEKIMRSVTREIVKYSPEAIIVVLTNPVDAMTYAVYKESGLPKEKVIGQSGILDTARFRTFVAQELNLSVKDVTGFVLGGHGDDMVPLVRYSYAGGIPLETLIPKERIDAIVERTRKGGGEIVNLLGNGSAYYAPAASLVEMVEAILKDQRRVMPTIAYLEGEYGYEGIYLGVPTIVGGNGLEQIIELELTEEERSQLDRSVESVKNVMKVLS.

Residues 12 to 17 (GAGFTG) and Asp-36 each bind NAD(+). 2 residues coordinate substrate: Arg-87 and Arg-93. Residues Asn-100 and 123–125 (LTN) contribute to the NAD(+) site. Asn-125 is a binding site for substrate. Position 149 is a phosphoserine (Ser-149). Arg-156 lines the substrate pocket. His-180 functions as the Proton acceptor in the catalytic mechanism.

The protein belongs to the LDH/MDH superfamily. MDH type 3 family.

It carries out the reaction (S)-malate + NAD(+) = oxaloacetate + NADH + H(+). Functionally, catalyzes the reversible oxidation of malate to oxaloacetate. This is Malate dehydrogenase from Bacillus pumilus (strain SAFR-032).